Here is a 211-residue protein sequence, read N- to C-terminus: ATP-dependent Clp protease proteolytic subunit 2 (211 aa).

Catalysis depends on serine 106, which acts as the Nucleophile. Histidine 131 is a catalytic residue.

This sequence belongs to the peptidase S14 family. Fourteen ClpP subunits assemble into 2 heptameric rings which stack back to back to give a disk-like structure with a central cavity, resembling the structure of eukaryotic proteasomes.

The protein localises to the cytoplasm. The catalysed reaction is Hydrolysis of proteins to small peptides in the presence of ATP and magnesium. alpha-casein is the usual test substrate. In the absence of ATP, only oligopeptides shorter than five residues are hydrolyzed (such as succinyl-Leu-Tyr-|-NHMec, and Leu-Tyr-Leu-|-Tyr-Trp, in which cleavage of the -Tyr-|-Leu- and -Tyr-|-Trp bonds also occurs).. Cleaves peptides in various proteins in a process that requires ATP hydrolysis. Has a chymotrypsin-like activity. Plays a major role in the degradation of misfolded proteins. The sequence is that of ATP-dependent Clp protease proteolytic subunit 2 from Bradyrhizobium diazoefficiens (strain JCM 10833 / BCRC 13528 / IAM 13628 / NBRC 14792 / USDA 110).